Reading from the N-terminus, the 440-residue chain is MKLWGGRFKEEESKLMEDFNSSLSFDKKLYYEDIKGSIAHVKMLVNQDIIKEEEKEKILLGLEGILKEIDGGILKIEGDYEDIHSFVEINLINKIGDVGKKLHTGRSRNDQVALDMKLYAKKSTEEVIECLKGLMDSLIKVGNENNYIMPGYTHLQRAQVVTFRYHLLAYFEMFKRDEKRLKNALEILNESPLGSGALAGSTYNIDREYTAKLLGFRKPVDNFLDGVSDRDYIIELISKFSIIMMHLSRLSEELILWSSSEFRFIQIGDAYSTGSSIMPQKKNPDGAELIRGKTGRVYGDLISILTVMKSLPLAYNKDMQEDKEPFFDAKDTVISCLKVMEGIISTLKVNKENLMKSVKKGFLNATEAADYLVNKGMAFRDAHKVIGEIVIYCEDKNSAIEDLSLEELKQFSDLFCEDIYEFIDYKNSINKGIKKEMGYF.

Belongs to the lyase 1 family. Argininosuccinate lyase subfamily.

The protein localises to the cytoplasm. It carries out the reaction 2-(N(omega)-L-arginino)succinate = fumarate + L-arginine. Its pathway is amino-acid biosynthesis; L-arginine biosynthesis; L-arginine from L-ornithine and carbamoyl phosphate: step 3/3. In Clostridium botulinum (strain Loch Maree / Type A3), this protein is Argininosuccinate lyase.